The sequence spans 454 residues: tRNA modification GTPase MnmE (454 aa).

3 residues coordinate (6S)-5-formyl-5,6,7,8-tetrahydrofolate: arginine 23, glutamate 80, and lysine 120. Residues glycine 216–glycine 377 enclose the TrmE-type G domain. Residue asparagine 226 participates in K(+) binding. Residues asparagine 226–serine 231, threonine 245–threonine 251, aspartate 270–glycine 273, asparagine 335–aspartate 338, and serine 358–arginine 360 each bind GTP. Serine 230 provides a ligand contact to Mg(2+). Positions 245, 247, and 250 each coordinate K(+). Residue threonine 251 participates in Mg(2+) binding. Lysine 454 is a binding site for (6S)-5-formyl-5,6,7,8-tetrahydrofolate.

The protein belongs to the TRAFAC class TrmE-Era-EngA-EngB-Septin-like GTPase superfamily. TrmE GTPase family. In terms of assembly, homodimer. Heterotetramer of two MnmE and two MnmG subunits. K(+) is required as a cofactor.

Its subcellular location is the cytoplasm. Its function is as follows. Exhibits a very high intrinsic GTPase hydrolysis rate. Involved in the addition of a carboxymethylaminomethyl (cmnm) group at the wobble position (U34) of certain tRNAs, forming tRNA-cmnm(5)s(2)U34. In Yersinia pseudotuberculosis serotype O:3 (strain YPIII), this protein is tRNA modification GTPase MnmE.